The following is a 421-amino-acid chain: Imidazolonepropionase (421 aa).

The Fe(3+) site is built by His-81 and His-83. The Zn(2+) site is built by His-81 and His-83. 4-imidazolone-5-propanoate contacts are provided by Arg-90, Tyr-153, and His-186. An N-formimidoyl-L-glutamate-binding site is contributed by Tyr-153. Residue His-251 participates in Fe(3+) binding. Residue His-251 coordinates Zn(2+). Position 254 (Glu-254) interacts with 4-imidazolone-5-propanoate. Asp-326 lines the Fe(3+) pocket. Zn(2+) is bound at residue Asp-326. N-formimidoyl-L-glutamate is bound by residues Asn-328 and Gly-330. Ser-331 contacts 4-imidazolone-5-propanoate.

Belongs to the metallo-dependent hydrolases superfamily. HutI family. It depends on Zn(2+) as a cofactor. Fe(3+) is required as a cofactor.

The protein localises to the cytoplasm. The enzyme catalyses 4-imidazolone-5-propanoate + H2O = N-formimidoyl-L-glutamate. The protein operates within amino-acid degradation; L-histidine degradation into L-glutamate; N-formimidoyl-L-glutamate from L-histidine: step 3/3. Functionally, catalyzes the hydrolytic cleavage of the carbon-nitrogen bond in imidazolone-5-propanoate to yield N-formimidoyl-L-glutamate. It is the third step in the universal histidine degradation pathway. The sequence is that of Imidazolonepropionase from Streptococcus sanguinis (strain SK36).